Reading from the N-terminus, the 359-residue chain is Transcription factor MYB115 (359 aa).

The span at 1–17 (MYHQNLISSTPNQNSNP) shows a compositional bias: polar residues. Positions 1–21 (MYHQNLISSTPNQNSNPHDWD) are disordered. HTH myb-type domains are found at residues 153 to 208 (KDII…RPNI) and 209 to 259 (KKND…RRLH). 2 DNA-binding regions (H-T-H motif) span residues 181–204 (WTSI…HNHL) and 232–255 (WTEI…NATK).

Accumulates in reproductive organs (e.g. flowers and siliques). Expressed at very low levels in vegetative organs.

Its subcellular location is the nucleus. Functionally, transcription activator that recognizes the motif 5'-TAACGG-3' in the promoter of target genes. Promotes vegetative-to-embryonic transition and the formation of somatic embryos from root explants in a WUS-independent manner. Together with MYB118, activates the transcription of S-ACP-DES2/AAD2 and S-ACP-DES3/AAD3 thus promoting the biosynthesis of omega-7 monounsaturated fatty acid in seed endosperm. This chain is Transcription factor MYB115, found in Arabidopsis thaliana (Mouse-ear cress).